Here is a 188-residue protein sequence, read N- to C-terminus: Large ribosomal subunit protein uL6 (188 aa).

It belongs to the universal ribosomal protein uL6 family.

This chain is Large ribosomal subunit protein uL6 (RPL9), found in Tetrahymena thermophila (strain SB210).